The primary structure comprises 159 residues: Cyclic pyranopterin monophosphate synthase (159 aa).

Residues 75 to 77 and 113 to 114 each bind substrate; these read LCH and ME. Asp128 is a catalytic residue.

It belongs to the MoaC family. As to quaternary structure, homohexamer; trimer of dimers.

The enzyme catalyses (8S)-3',8-cyclo-7,8-dihydroguanosine 5'-triphosphate = cyclic pyranopterin phosphate + diphosphate. Its pathway is cofactor biosynthesis; molybdopterin biosynthesis. Catalyzes the conversion of (8S)-3',8-cyclo-7,8-dihydroguanosine 5'-triphosphate to cyclic pyranopterin monophosphate (cPMP). The polypeptide is Cyclic pyranopterin monophosphate synthase (Serratia proteamaculans (strain 568)).